The following is a 484-amino-acid chain: UDP-glucose:undecaprenyl-phosphate glucose-1-phosphate transferase (484 aa).

The next 5 helical transmembrane spans lie at 37–57 (MVVA…VPAA), 59–79 (YRVA…LFPL), 93–113 (VVLG…ALIV), 122–142 (GWVG…RTLL), and 299–319 (ILAV…AVGV).

Belongs to the bacterial sugar transferase family.

It is found in the cell inner membrane. It carries out the reaction di-trans,octa-cis-undecaprenyl phosphate + UDP-alpha-D-glucose = alpha-D-glucosyl di-trans,octa-cis-undecaprenyl diphosphate + UMP. It participates in glycan biosynthesis; xanthan biosynthesis. Functionally, is the initiating enzyme for the synthesis of the exopolysaccharide xanthan. Catalyzes the transfer of the glucose-1-phosphate moiety from UDP-Glc onto the carrier lipid undecaprenyl phosphate (C55-P), forming a phosphoanhydride bond yielding to glucosyl-pyrophosphoryl-undecaprenol (Glc-PP-C55). The chain is UDP-glucose:undecaprenyl-phosphate glucose-1-phosphate transferase (gumD) from Xanthomonas campestris pv. campestris.